Consider the following 437-residue polypeptide: Trigger factor (437 aa).

One can recognise a PPIase FKBP-type domain in the interval Gly164 to Gly249.

It belongs to the FKBP-type PPIase family. Tig subfamily.

The protein resides in the cytoplasm. The enzyme catalyses [protein]-peptidylproline (omega=180) = [protein]-peptidylproline (omega=0). Functionally, involved in protein export. Acts as a chaperone by maintaining the newly synthesized protein in an open conformation. Functions as a peptidyl-prolyl cis-trans isomerase. The chain is Trigger factor from Campylobacter hominis (strain ATCC BAA-381 / DSM 21671 / CCUG 45161 / LMG 19568 / NCTC 13146 / CH001A).